The chain runs to 629 residues: Phosphomethylpyrimidine synthase (629 aa).

The disordered stretch occupies residues 1 to 30; it reads MTTKLKNASNLSESAQVDQQSVQPFTRSQK. Substrate-binding positions include asparagine 233, methionine 262, tyrosine 291, histidine 327, 347-349, 388-391, and glutamate 427; these read SRG and DGLR. Histidine 431 is a binding site for Zn(2+). Tyrosine 454 provides a ligand contact to substrate. A Zn(2+)-binding site is contributed by histidine 495. The [4Fe-4S] cluster site is built by cysteine 575, cysteine 578, and cysteine 583.

It belongs to the ThiC family. In terms of assembly, homodimer. Requires [4Fe-4S] cluster as cofactor.

The catalysed reaction is 5-amino-1-(5-phospho-beta-D-ribosyl)imidazole + S-adenosyl-L-methionine = 4-amino-2-methyl-5-(phosphooxymethyl)pyrimidine + CO + 5'-deoxyadenosine + formate + L-methionine + 3 H(+). The protein operates within cofactor biosynthesis; thiamine diphosphate biosynthesis. In terms of biological role, catalyzes the synthesis of the hydroxymethylpyrimidine phosphate (HMP-P) moiety of thiamine from aminoimidazole ribotide (AIR) in a radical S-adenosyl-L-methionine (SAM)-dependent reaction. The chain is Phosphomethylpyrimidine synthase from Pseudomonas fluorescens (strain ATCC BAA-477 / NRRL B-23932 / Pf-5).